The sequence spans 130 residues: Small ribosomal subunit protein uS11 (130 aa).

The segment at 109-130 (EDVTPIPHDGTGRPGGKRGRRV) is disordered.

The protein belongs to the universal ribosomal protein uS11 family. As to quaternary structure, part of the 30S ribosomal subunit.

Its function is as follows. Located on the platform of the 30S subunit. In Methanosphaera stadtmanae (strain ATCC 43021 / DSM 3091 / JCM 11832 / MCB-3), this protein is Small ribosomal subunit protein uS11.